The primary structure comprises 320 residues: ATP-dependent 6-phosphofructokinase (320 aa).

Position 12 (glycine 12) interacts with ATP. Residues 22–26 and 55–60 contribute to the ADP site; these read RGVVR and RYSVSD. ATP-binding positions include 73–74 and 103–106; these read RF and GDGS. Aspartate 104 is a Mg(2+) binding site. Residue 126–128 coordinates substrate; sequence TID. Aspartate 128 acts as the Proton acceptor in catalysis. Arginine 155 contributes to the ADP binding site. Residues arginine 163 and 170–172 contribute to the substrate site; that span reads MGR. ADP-binding positions include 186 to 188, lysine 212, and 214 to 216; these read GCE and KKH. Substrate contacts are provided by residues glutamate 223, arginine 244, and 250–253; that span reads HIQR.

This sequence belongs to the phosphofructokinase type A (PFKA) family. ATP-dependent PFK group I subfamily. Prokaryotic clade 'B1' sub-subfamily. In terms of assembly, homotetramer. Mg(2+) serves as cofactor.

It localises to the cytoplasm. It catalyses the reaction beta-D-fructose 6-phosphate + ATP = beta-D-fructose 1,6-bisphosphate + ADP + H(+). It participates in carbohydrate degradation; glycolysis; D-glyceraldehyde 3-phosphate and glycerone phosphate from D-glucose: step 3/4. Its activity is regulated as follows. Allosterically activated by ADP and other diphosphonucleosides, and allosterically inhibited by phosphoenolpyruvate. Its function is as follows. Catalyzes the phosphorylation of D-fructose 6-phosphate to fructose 1,6-bisphosphate by ATP, the first committing step of glycolysis. This Salmonella gallinarum (strain 287/91 / NCTC 13346) protein is ATP-dependent 6-phosphofructokinase.